A 72-amino-acid polypeptide reads, in one-letter code: Translation initiation factor IF-1 (72 aa).

One can recognise an S1-like domain in the interval 1-72 (MPKEEVLEFP…TKGRITYRFK (72 aa)).

This sequence belongs to the IF-1 family. As to quaternary structure, component of the 30S ribosomal translation pre-initiation complex which assembles on the 30S ribosome in the order IF-2 and IF-3, IF-1 and N-formylmethionyl-tRNA(fMet); mRNA recruitment can occur at any time during PIC assembly.

The protein resides in the cytoplasm. Its function is as follows. One of the essential components for the initiation of protein synthesis. Stabilizes the binding of IF-2 and IF-3 on the 30S subunit to which N-formylmethionyl-tRNA(fMet) subsequently binds. Helps modulate mRNA selection, yielding the 30S pre-initiation complex (PIC). Upon addition of the 50S ribosomal subunit IF-1, IF-2 and IF-3 are released leaving the mature 70S translation initiation complex. The sequence is that of Translation initiation factor IF-1 from Rhizobium etli (strain ATCC 51251 / DSM 11541 / JCM 21823 / NBRC 15573 / CFN 42).